Here is a 214-residue protein sequence, read N- to C-terminus: Alkaline phosphatase-like protein (214 aa).

The next 3 membrane-spanning stretches (helical) occupy residues 48–68 (LGII…ALIL), 141–161 (FLIL…CLGA), and 177–197 (YSSV…LIFV).

This sequence belongs to the DedA family.

It localises to the cell membrane. The protein is Alkaline phosphatase-like protein (apl) of Lactococcus lactis subsp. lactis (strain IL1403) (Streptococcus lactis).